The primary structure comprises 464 residues: tRNA modification GTPase MnmE (464 aa).

(6S)-5-formyl-5,6,7,8-tetrahydrofolate is bound by residues Arg27, Glu90, and Lys129. The TrmE-type G domain occupies 222-384 (GVTLVLAGSV…LYDKIKTLIS (163 aa)). Residues 232 to 237 (NAGKSS), 251 to 257 (SSYPGTT), and 276 to 279 (DTAG) contribute to the GTP site. Positions 236 and 257 each coordinate Mg(2+). Lys464 provides a ligand contact to (6S)-5-formyl-5,6,7,8-tetrahydrofolate.

It belongs to the TRAFAC class TrmE-Era-EngA-EngB-Septin-like GTPase superfamily. TrmE GTPase family. As to quaternary structure, homodimer. Heterotetramer of two MnmE and two MnmG subunits. It depends on K(+) as a cofactor.

It localises to the cytoplasm. Exhibits a very high intrinsic GTPase hydrolysis rate. Involved in the addition of a carboxymethylaminomethyl (cmnm) group at the wobble position (U34) of certain tRNAs, forming tRNA-cmnm(5)s(2)U34. The sequence is that of tRNA modification GTPase MnmE from Borrelia garinii subsp. bavariensis (strain ATCC BAA-2496 / DSM 23469 / PBi) (Borreliella bavariensis).